Reading from the N-terminus, the 622-residue chain is Sodium/potassium/calcium exchanger 4 (622 aa).

The N-terminal stretch at 1–38 (MALRGTLRPLKVRRRREMLPQQVGFVCAVLALVCCASG) is a signal peptide. The Extracellular segment spans residues 39 to 97 (LFGSLGHKTASASKRVLPDTWRNRKLMAPVNGTQTAKNCTDPAIHEFPTDLFSNKERQH). N69 and N76 each carry an N-linked (GlcNAc...) asparagine glycan. A helical transmembrane segment spans residues 98–118 (GAVLLHILGALYMFYALAIVC). At 119–142 (DDFFVPSLEKICERLHLSEDVAGA) the chain is on the cytoplasmic side. An Alpha-1 repeat occupies 139-179 (VAGATFMAAGSSTPELFASVIGVFITHGDVGVGTIVGSAVF). A helical transmembrane segment spans residues 143-163 (TFMAAGSSTPELFASVIGVFI). The Extracellular segment spans residues 164-172 (THGDVGVGT). A helical membrane pass occupies residues 173–193 (IVGSAVFNILCIIGVCGLFAG). At 194–200 (QVVRLTW) the chain is on the cytoplasmic side. The helical transmembrane segment at 201-221 (WAVCRDSVYYTISVIVLIVFI) threads the bilayer. At 222–224 (YDE) the chain is on the extracellular side. A helical membrane pass occupies residues 225 to 245 (QIVWWEGLVLIILYVFYILIM). Topologically, residues 246–457 (KYNVKMQAFF…RWEKFFMVTF (212 aa)) are cytoplasmic. Positions 358-410 (ANGVSSKPLQNGRHENIENGNVPVENPEDPQQNQEQQPPPQPPPPEPEPVEAD) are disordered. Low complexity predominate over residues 380–393 (PVENPEDPQQNQEQ). The segment covering 394–404 (QPPPQPPPPEP) has biased composition (pro residues). The chain crosses the membrane as a helical span at residues 458–478 (ITATLWIAVFSYIMVWLVTII). Residue G479 is a topological domain, extracellular. The chain crosses the membrane as a helical span at residues 480–500 (YTLGIPDVIMGITFLAAGTSV). One copy of the Alpha-2 repeat lies at 495–526 (AAGTSVPDCMASLIVARQGLGDMAVSNTIGSN). Residues 501–526 (PDCMASLIVARQGLGDMAVSNTIGSN) lie on the Cytoplasmic side of the membrane. Residues 527 to 547 (VFDILVGLGVPWGLQTMVVNY) traverse the membrane as a helical segment. At 548–557 (GSTVKINSRG) the chain is on the extracellular side. A helical transmembrane segment spans residues 558–578 (LVYSVVLLLGSVALTVLGIHL). At 579–586 (NKWRLDRK) the chain is on the cytoplasmic side. Residues 587 to 607 (LGVYVLVLYAIFLCFSIMIEF) traverse the membrane as a helical segment. Residues 608 to 622 (NVFTFVNLPMCREDD) lie on the Extracellular side of the membrane.

This sequence belongs to the Ca(2+):cation antiporter (CaCA) (TC 2.A.19) family. SLC24A subfamily. Expressed abundantly in all regions of the brain, aorta, lung and thymus. Expressed at lower levels in the stomach and intestine.

It is found in the cell membrane. The protein localises to the cytoplasm. It catalyses the reaction Ca(2+)(out) + K(+)(out) + 4 Na(+)(in) = Ca(2+)(in) + K(+)(in) + 4 Na(+)(out). Functionally, calcium, potassium:sodium antiporter that transports 1 Ca(2+) and 1 K(+) in exchange for 4 Na(+). Controls the rapid response termination and proper regulation of adaptation in olfactory sensory neurons (OSNs) which subsequently influences how odor information is encoded and perceived. May play a role in calcium transport during amelogenesis. This chain is Sodium/potassium/calcium exchanger 4, found in Homo sapiens (Human).